A 253-amino-acid polypeptide reads, in one-letter code: Acetylglutamate kinase (253 aa).

Substrate-binding positions include 37–38 (GG), arginine 59, and asparagine 149.

It belongs to the acetylglutamate kinase family. ArgB subfamily.

It is found in the cytoplasm. The catalysed reaction is N-acetyl-L-glutamate + ATP = N-acetyl-L-glutamyl 5-phosphate + ADP. It functions in the pathway amino-acid biosynthesis; L-arginine biosynthesis; N(2)-acetyl-L-ornithine from L-glutamate: step 2/4. Functionally, catalyzes the ATP-dependent phosphorylation of N-acetyl-L-glutamate. This is Acetylglutamate kinase from Rubrobacter xylanophilus (strain DSM 9941 / JCM 11954 / NBRC 16129 / PRD-1).